Reading from the N-terminus, the 321-residue chain is tRNA(Ile)-lysidine synthase (321 aa).

Residue 30-35 (SGGSDS) participates in ATP binding.

Belongs to the tRNA(Ile)-lysidine synthase family.

The protein localises to the cytoplasm. The enzyme catalyses cytidine(34) in tRNA(Ile2) + L-lysine + ATP = lysidine(34) in tRNA(Ile2) + AMP + diphosphate + H(+). Ligates lysine onto the cytidine present at position 34 of the AUA codon-specific tRNA(Ile) that contains the anticodon CAU, in an ATP-dependent manner. Cytidine is converted to lysidine, thus changing the amino acid specificity of the tRNA from methionine to isoleucine. This chain is tRNA(Ile)-lysidine synthase, found in Chlamydia trachomatis serovar A (strain ATCC VR-571B / DSM 19440 / HAR-13).